A 142-amino-acid polypeptide reads, in one-letter code: uncharacterized protein (142 aa).

Homodimer.

This is an uncharacterized protein from Bacillus subtilis (strain 168).